The following is a 530-amino-acid chain: MDSQKYCFKENENVTVDKACFLISNITIGPESINLQQEALQRIISTLANKNDEIQNFIDTLHHTLKGVQENSSNILSELDEEFDSLYSILDEVKESMINCIKQEQARKSQELQSQISQCNNALENSEELLEFATRSLDIKEPEEFSKAARQIKDRVTMASAFRLSLKPKVSDNMTHLMVDFSQERQMLQTLKFLPVPKAPEIDPVECLVADNSVTVAWRMPEEDNKIDHFILEHRKTNFDGLPRVKDERCWEIIDNIKGTEYTLSGLKFDSKYMNFRVRACNKAVAGEYSDPVTLETKALNFNLDNSSSHLNLKVEDTCVEWDPTGGKGQESKIKGKENKGRSGTPSPKRTSVGSRPPAVRGSRDRFTGESYTVLGDTAIESGQHYWEVKAQKDCKSYSVGVAYKTLGKFDQLGKTNTSWCIHVNNWLQNTFAAKHNNKVKALDVTVPEKIGVFCDFDGGQLSFYDANSKQLLYSFKTKFTQPVLPGFMVWCGGLSLSTGMQVPSAVRTLQKSENGMTGSASSLNNVVTQ.

Position 1 is an N-acetylmethionine (methionine 1). Positions 102–141 (KQEQARKSQELQSQISQCNNALENSEELLEFATRSLDIKE) form a coiled coil. In terms of domain architecture, COS spans 137–194 (LDIKEPEEFSKAARQIKDRVTMASAFRLSLKPKVSDNMTHLMVDFSQERQMLQTLKFL). The region spanning 196–300 (VPKAPEIDPV…DPVTLETKAL (105 aa)) is the Fibronectin type-III domain. The B30.2/SPRY domain maps to 300-506 (LNFNLDNSSS…LSTGMQVPSA (207 aa)). The interval 322 to 366 (WDPTGGKGQESKIKGKENKGRSGTPSPKRTSVGSRPPAVRGSRDR) is disordered. The span at 330–341 (QESKIKGKENKG) shows a compositional bias: basic and acidic residues. Residues 342 to 354 (RSGTPSPKRTSVG) show a composition bias toward polar residues. Phosphoserine is present on residues serine 520 and serine 523.

The polypeptide is FSD1-like protein (FSD1L) (Homo sapiens (Human)).